Here is a 557-residue protein sequence, read N- to C-terminus: Aerobic glycerol-3-phosphate dehydrogenase (557 aa).

Residue 21-49 participates in FAD binding; that stretch reads DVVIVGGGITGAGIALDASNRGMKVALVE.

This sequence belongs to the FAD-dependent glycerol-3-phosphate dehydrogenase family. It depends on FAD as a cofactor.

It is found in the cytoplasm. The catalysed reaction is a quinone + sn-glycerol 3-phosphate = dihydroxyacetone phosphate + a quinol. Its pathway is polyol metabolism; glycerol degradation via glycerol kinase pathway; glycerone phosphate from sn-glycerol 3-phosphate (aerobic route): step 1/1. In Staphylococcus epidermidis (strain ATCC 35984 / DSM 28319 / BCRC 17069 / CCUG 31568 / BM 3577 / RP62A), this protein is Aerobic glycerol-3-phosphate dehydrogenase (glpD).